Reading from the N-terminus, the 293-residue chain is Protease HtpX (293 aa).

Helical transmembrane passes span 4–24 (IALF…VLSL) and 34–54 (GLLI…LLMS). Residue H139 coordinates Zn(2+). E140 is an active-site residue. H143 provides a ligand contact to Zn(2+). A run of 2 helical transmembrane segments spans residues 158–178 (VVNT…AGFM) and 193–213 (LIYF…ASII). E222 serves as a coordination point for Zn(2+).

Belongs to the peptidase M48B family. It depends on Zn(2+) as a cofactor.

The protein localises to the cell inner membrane. The sequence is that of Protease HtpX from Enterobacter sp. (strain 638).